The sequence spans 249 residues: 2,3-bisphosphoglycerate-dependent phosphoglycerate mutase (249 aa).

Residues 8–15, 21–22, Arg-60, 87–90, Lys-98, 114–115, and 183–184 each bind substrate; these read RHGQSAWN, TG, ERHY, RR, and GN. The active-site Tele-phosphohistidine intermediate is His-9. Glu-87 serves as the catalytic Proton donor/acceptor. Residues 115–137 form a disordered region; it reads RSYDTPPPPLPADDPRSPAGDAR.

The protein belongs to the phosphoglycerate mutase family. BPG-dependent PGAM subfamily. As to quaternary structure, homodimer.

It carries out the reaction (2R)-2-phosphoglycerate = (2R)-3-phosphoglycerate. Its pathway is carbohydrate degradation; glycolysis; pyruvate from D-glyceraldehyde 3-phosphate: step 3/5. Its function is as follows. Catalyzes the interconversion of 2-phosphoglycerate and 3-phosphoglycerate. The polypeptide is 2,3-bisphosphoglycerate-dependent phosphoglycerate mutase (Nitratidesulfovibrio vulgaris (strain DSM 19637 / Miyazaki F) (Desulfovibrio vulgaris)).